A 177-amino-acid polypeptide reads, in one-letter code: Large ribosomal subunit protein uL6 (177 aa).

This sequence belongs to the universal ribosomal protein uL6 family. In terms of assembly, part of the 50S ribosomal subunit.

This protein binds to the 23S rRNA, and is important in its secondary structure. It is located near the subunit interface in the base of the L7/L12 stalk, and near the tRNA binding site of the peptidyltransferase center. The chain is Large ribosomal subunit protein uL6 from Bartonella henselae (strain ATCC 49882 / DSM 28221 / CCUG 30454 / Houston 1) (Rochalimaea henselae).